Reading from the N-terminus, the 1196-residue chain is DNA-directed RNA polymerase subunit 2 (1196 aa).

The tract at residues 1074-1095 (SRARGPTQLLTRQAPEGRSRDG) is disordered. Residues 1133-1154 (CDSCGQFAHKVPEKKYYTCTGC) form a C4-type zinc finger.

Belongs to the RNA polymerase beta chain family.

It localises to the virion. The enzyme catalyses RNA(n) + a ribonucleoside 5'-triphosphate = RNA(n+1) + diphosphate. In terms of biological role, DNA-dependent RNA polymerase catalyzes the transcription of DNA into RNA using the four ribonucleoside triphosphates as substrates. In Acanthamoeba polyphaga mimivirus (APMV), this protein is DNA-directed RNA polymerase subunit 2 (RPO2).